The chain runs to 68 residues: Cell division protein ZapB (68 aa).

Positions 3 to 58 (LELLSKLETKIQAALETIELLKMELEEEKQKNHTLNEQNQQLSQDLTSWNEKVTGL) form a coiled coil.

Belongs to the ZapB family. Homodimer. The ends of the coiled-coil dimer bind to each other, forming polymers. Interacts with FtsZ.

It is found in the cytoplasm. Its function is as follows. Non-essential, abundant cell division factor that is required for proper Z-ring formation. It is recruited early to the divisome by direct interaction with FtsZ, stimulating Z-ring assembly and thereby promoting cell division earlier in the cell cycle. Its recruitment to the Z-ring requires functional FtsA or ZipA. The protein is Cell division protein ZapB of Shewanella loihica (strain ATCC BAA-1088 / PV-4).